Reading from the N-terminus, the 455-residue chain is Kynurenine--oxoglutarate transaminase 3 (455 aa).

Position 71 (Gly71) interacts with substrate. Residue Lys116 is modified to N6-acetyllysine; alternate. At Lys116 the chain carries N6-succinyllysine; alternate. A substrate-binding site is contributed by Asn218. N6-(pyridoxal phosphate)lysine is present on Lys280. Residue Arg430 coordinates substrate.

The protein belongs to the class-I pyridoxal-phosphate-dependent aminotransferase family. As to quaternary structure, homodimer. Pyridoxal 5'-phosphate serves as cofactor.

The catalysed reaction is L-kynurenine + 2-oxoglutarate = kynurenate + L-glutamate + H2O. The enzyme catalyses L-kynurenine + glyoxylate = kynurenate + glycine + H2O. It catalyses the reaction 3-hydroxy-L-kynurenine + glyoxylate = xanthurenate + glycine + H2O. It carries out the reaction an S-substituted L-cysteine + H2O = a thiol + pyruvate + NH4(+). Its pathway is amino-acid degradation; L-kynurenine degradation; kynurenate from L-kynurenine: step 1/2. In terms of biological role, catalyzes the irreversible transamination of the L-tryptophan metabolite L-kynurenine to form kynurenic acid (KA), an intermediate in the tryptophan catabolic pathway which is also a broad spectrum antagonist of the three ionotropic excitatory amino acid receptors among others. May catalyze the beta-elimination of S-conjugates and Se-conjugates of L-(seleno)cysteine, resulting in the cleavage of the C-S or C-Se bond. Has transaminase activity towards L-kynurenine, tryptophan, phenylalanine, serine, cysteine, methionine, histidine, glutamine and asparagine with glyoxylate as an amino group acceptor (in vitro). Has lower activity with 2-oxoglutarate as amino group acceptor (in vitro). In Bos taurus (Bovine), this protein is Kynurenine--oxoglutarate transaminase 3.